The primary structure comprises 56 residues: Large ribosomal subunit protein bL33 (56 aa).

It belongs to the bacterial ribosomal protein bL33 family.

This chain is Large ribosomal subunit protein bL33, found in Campylobacter hominis (strain ATCC BAA-381 / DSM 21671 / CCUG 45161 / LMG 19568 / NCTC 13146 / CH001A).